We begin with the raw amino-acid sequence, 284 residues long: D-tagatose-1,6-bisphosphate aldolase subunit GatY (284 aa).

Asp82 serves as the catalytic Proton donor. Zn(2+) contacts are provided by His83 and His180. Gly181 contributes to the dihydroxyacetone phosphate binding site. His208 contributes to the Zn(2+) binding site. Residues 209-211 (GAS) and 230-233 (NVAT) each bind dihydroxyacetone phosphate.

The protein belongs to the class II fructose-bisphosphate aldolase family. TagBP aldolase GatY subfamily. In terms of assembly, forms a complex with GatZ. It depends on Zn(2+) as a cofactor.

It catalyses the reaction D-tagatofuranose 1,6-bisphosphate = D-glyceraldehyde 3-phosphate + dihydroxyacetone phosphate. Its pathway is carbohydrate metabolism; D-tagatose 6-phosphate degradation; D-glyceraldehyde 3-phosphate and glycerone phosphate from D-tagatose 6-phosphate: step 2/2. In terms of biological role, catalytic subunit of the tagatose-1,6-bisphosphate aldolase GatYZ, which catalyzes the reversible aldol condensation of dihydroxyacetone phosphate (DHAP or glycerone-phosphate) with glyceraldehyde 3-phosphate (G3P) to produce tagatose 1,6-bisphosphate (TBP). Requires GatZ subunit for full activity and stability. Is involved in the catabolism of galactitol. The protein is D-tagatose-1,6-bisphosphate aldolase subunit GatY of Salmonella choleraesuis (strain SC-B67).